Consider the following 150-residue polypeptide: Transcription antitermination protein NusB (150 aa).

Belongs to the NusB family.

Functionally, involved in transcription antitermination. Required for transcription of ribosomal RNA (rRNA) genes. Binds specifically to the boxA antiterminator sequence of the ribosomal RNA (rrn) operons. This chain is Transcription antitermination protein NusB, found in Streptococcus pyogenes serotype M1.